We begin with the raw amino-acid sequence, 375 residues long: Chaperone protein DnaJ (375 aa).

The 64-residue stretch at 5 to 68 folds into the J domain; the sequence is DYYEILGVSK…KKRAQYDQFG (64 aa). Residues 135–217 form a CR-type zinc finger; that stretch reads GISKNINYDR…CYGKKVINER (83 aa). Zn(2+) is bound by residues Cys148, Cys151, Cys165, Cys168, Cys191, Cys194, Cys205, and Cys208. CXXCXGXG motif repeat units lie at residues 148–155, 165–172, 191–198, and 205–212; these read CHKCQGTG, CTKCHGRG, CHECEGTG, and CEQCYGKK.

The protein belongs to the DnaJ family. Homodimer. Zn(2+) is required as a cofactor.

It is found in the cytoplasm. In terms of biological role, participates actively in the response to hyperosmotic and heat shock by preventing the aggregation of stress-denatured proteins and by disaggregating proteins, also in an autonomous, DnaK-independent fashion. Unfolded proteins bind initially to DnaJ; upon interaction with the DnaJ-bound protein, DnaK hydrolyzes its bound ATP, resulting in the formation of a stable complex. GrpE releases ADP from DnaK; ATP binding to DnaK triggers the release of the substrate protein, thus completing the reaction cycle. Several rounds of ATP-dependent interactions between DnaJ, DnaK and GrpE are required for fully efficient folding. Also involved, together with DnaK and GrpE, in the DNA replication of plasmids through activation of initiation proteins. The protein is Chaperone protein DnaJ of Ureaplasma parvum serovar 3 (strain ATCC 700970).